The following is a 61-amino-acid chain: U-stichotoxin-Hcr1a (61 aa).

The first 21 residues, 1 to 21 (MKPAIFLMLFVAMFLISEGEG), serve as a signal peptide directing secretion. Positions 22-31 (FKPKDAPQER) are excised as a propeptide. A Hydroxyproline modification is found at Pro-36. Intrachain disulfides connect Cys-41–Cys-53 and Cys-44–Cys-59.

Belongs to the Hau1a/HC18/HC19 family.

Its subcellular location is the secreted. The protein resides in the nematocyst. Toxin that is lethal to crab. Does not produce the typical symptoms associated with sodium channel toxins in crabs, suggesting that it likely does not act on sodium channels. This Radianthus crispa (Leathery sea anemone) protein is U-stichotoxin-Hcr1a.